Reading from the N-terminus, the 450-residue chain is Chromosomal replication initiator protein DnaA (450 aa).

Residues Met-1–Ile-79 are domain I, interacts with DnaA modulators. The tract at residues Ile-79–Ser-111 is domain II. Positions Met-112 to Ser-328 are domain III, AAA+ region. Positions 156, 158, 159, and 160 each coordinate ATP. The domain IV, binds dsDNA stretch occupies residues Ser-329–Leu-450.

It belongs to the DnaA family. As to quaternary structure, oligomerizes as a right-handed, spiral filament on DNA at oriC.

Its subcellular location is the cytoplasm. Its function is as follows. Plays an essential role in the initiation and regulation of chromosomal replication. ATP-DnaA binds to the origin of replication (oriC) to initiate formation of the DNA replication initiation complex once per cell cycle. Binds the DnaA box (a 9 base pair repeat at the origin) and separates the double-stranded (ds)DNA. Forms a right-handed helical filament on oriC DNA; dsDNA binds to the exterior of the filament while single-stranded (ss)DNA is stabiized in the filament's interior. The ATP-DnaA-oriC complex binds and stabilizes one strand of the AT-rich DNA unwinding element (DUE), permitting loading of DNA polymerase. After initiation quickly degrades to an ADP-DnaA complex that is not apt for DNA replication. Binds acidic phospholipids. This Geobacillus sp. (strain WCH70) protein is Chromosomal replication initiator protein DnaA.